Consider the following 301-residue polypeptide: uncharacterized protein (301 aa).

This is an uncharacterized protein from Methanocaldococcus jannaschii (strain ATCC 43067 / DSM 2661 / JAL-1 / JCM 10045 / NBRC 100440) (Methanococcus jannaschii).